Here is a 232-residue protein sequence, read N- to C-terminus: MVDHVHFERELTLLKSDVSKMLFLVSESLNDAIESLETMNETLARKVLESDDMIDELNREIEEKAYQIIARYNPILKQLRYIITILKFSNDLERIGDLSCNIAEKCLFLSEEKIKFEMLKELKDMFGSTLKVVQDAFKAFVEEDVDLAFRLWKFDDVIDEMEKKIRRIVVERIREGNISAELALVYILIARDLERVGDHANNLCEEVIYIETGKNMKEFLRGVESGSEGADS.

Belongs to the PhoU family. Homodimer.

It is found in the cytoplasm. In terms of biological role, plays a role in the regulation of phosphate uptake. The chain is Phosphate-specific transport system accessory protein PhoU homolog 1 (phoU1) from Thermotoga maritima (strain ATCC 43589 / DSM 3109 / JCM 10099 / NBRC 100826 / MSB8).